The primary structure comprises 204 residues: Ribosomal RNA small subunit methyltransferase G (204 aa).

S-adenosyl-L-methionine is bound by residues G73, F78, and R139.

The protein belongs to the methyltransferase superfamily. RNA methyltransferase RsmG family.

The protein resides in the cytoplasm. It carries out the reaction guanosine(527) in 16S rRNA + S-adenosyl-L-methionine = N(7)-methylguanosine(527) in 16S rRNA + S-adenosyl-L-homocysteine. Specifically methylates the N7 position of guanine in position 527 of 16S rRNA. This chain is Ribosomal RNA small subunit methyltransferase G, found in Coxiella burnetii (strain CbuG_Q212) (Coxiella burnetii (strain Q212)).